We begin with the raw amino-acid sequence, 338 residues long: Putative ankyrin repeat protein CBU_0781 (338 aa).

Residues Met1 to Pro31 are disordered. Residues Pro7–Arg19 show a composition bias toward low complexity. Residues Thr20 to Pro31 are compositionally biased toward basic residues. ANK repeat units lie at residues Gln92–Lys124 and Leu125–Lys157. Positions Ser197–Arg242 form a coiled coil. The tract at residues Lys319–Arg338 is disordered. The span at Leu325–Arg338 shows a compositional bias: low complexity.

This is Putative ankyrin repeat protein CBU_0781 from Coxiella burnetii (strain RSA 493 / Nine Mile phase I).